A 663-amino-acid polypeptide reads, in one-letter code: UvrABC system protein B (663 aa).

A Helicase ATP-binding domain is found at 26–414 (DGLESGLAKQ…DNVAEQVVRP (389 aa)). 39 to 46 (GVTGSGKT) is a binding site for ATP. A Beta-hairpin motif is present at residues 92–115 (YYDYYQPEAYVPASDTFIEKDASI). A Helicase C-terminal domain is found at 430–596 (QVDDLMSEIR…GINKSVEDIL (167 aa)). Positions 624–659 (AKEINALEKQMYAHAQNMEFELAAKIRDEYLLLKEQ) constitute a UVR domain.

This sequence belongs to the UvrB family. As to quaternary structure, forms a heterotetramer with UvrA during the search for lesions. Interacts with UvrC in an incision complex.

It localises to the cytoplasm. Functionally, the UvrABC repair system catalyzes the recognition and processing of DNA lesions. A damage recognition complex composed of 2 UvrA and 2 UvrB subunits scans DNA for abnormalities. Upon binding of the UvrA(2)B(2) complex to a putative damaged site, the DNA wraps around one UvrB monomer. DNA wrap is dependent on ATP binding by UvrB and probably causes local melting of the DNA helix, facilitating insertion of UvrB beta-hairpin between the DNA strands. Then UvrB probes one DNA strand for the presence of a lesion. If a lesion is found the UvrA subunits dissociate and the UvrB-DNA preincision complex is formed. This complex is subsequently bound by UvrC and the second UvrB is released. If no lesion is found, the DNA wraps around the other UvrB subunit that will check the other stand for damage. This is UvrABC system protein B from Legionella pneumophila (strain Paris).